The sequence spans 245 residues: MSQVNMRDMLKAGVHFGHQTRYWNPKMGKYIFGARNKIHIINLEKTLPMFNDALSFVERLAQGKNKIMFVGTKRSAGKIVAEQAARCGSPYVDHRWLGGMLTNYKTIRASIKRLRDLETQAEDGTFAKLTKKEALMRSRDLEKLDRSLGGIKDMGGLPDALFVIDVDHERIAITEANKLGIPVIGVVDTNSSPEGVDYIIPGNDDAIRAIELYMTSMADAVIRGRNNVAGGTEVYAEEAAAPAAE.

This sequence belongs to the universal ribosomal protein uS2 family.

This chain is Small ribosomal subunit protein uS2, found in Pseudomonas putida (strain W619).